The sequence spans 77 residues: U8-lycotoxin-Ls1m (77 aa).

Residues 1 to 20 form the signal peptide; sequence MKLMIFTGLFLFAIVSLIEA. Residues 21 to 26 constitute a propeptide that is removed on maturation; the sequence is QAENEK.

Belongs to the neurotoxin 19 (CSTX) family. 08 (U8-Lctx) subfamily. Post-translationally, contains 4 disulfide bonds. Expressed by the venom gland.

Its subcellular location is the secreted. The protein is U8-lycotoxin-Ls1m of Lycosa singoriensis (Wolf spider).